The chain runs to 526 residues: Type 2 glycosyltransferase (526 aa).

A helical transmembrane segment spans residues 25–45 (PSFDFWYSSTFWLYLFLGLWF). Residues asparagine 298 and asparagine 317 are each glycosylated (N-linked (GlcNAc...) asparagine). 3 consecutive transmembrane segments (helical) span residues 340–360 (FATF…SCWW), 375–395 (WSQF…GLFI), and 403–423 (FLPV…YALI). N-linked (GlcNAc...) asparagine glycosylation is found at asparagine 426 and asparagine 517.

The protein belongs to the GT2 glycosyltransferase family.

Its subcellular location is the cell membrane. The protein localises to the secreted. The protein resides in the cell wall. Its function is as follows. Glycosyltransferase involved in the maintenance of the outermost surface of the fungal cell wall. Likely functions in the synthesis of a currently unknown, potentially minor but widespread, extracellular or outer cell wall polysaccharide which plays a key role in facilitating many interactions between plants and fungi by enabling hyphal growth on solid matrices. The protein is Type 2 glycosyltransferase of Gibberella zeae (strain ATCC MYA-4620 / CBS 123657 / FGSC 9075 / NRRL 31084 / PH-1) (Wheat head blight fungus).